The primary structure comprises 202 residues: MSVVDLSLWEPKTALGRMVKEGKIRTIDEIFANNLLIKEPEIVDILLPGLKQELLNLNLVQRQTHAGERNQFQAVVAVGNEDGYVGVGIGKSRQVRQAIEKATREAKLNITPVRRGCGSWKCSCDEPHSVPFVVSGKSGSVEVTLIPAPKGVGLVAGDVAKVVLRLAGIKDVWTKTRGDTRTTLNFALAVFNALRNTYYFKL.

An S5 DRBM domain is found at 50–113; the sequence is LKQELLNLNL…REAKLNITPV (64 aa).

The protein belongs to the universal ribosomal protein uS5 family. As to quaternary structure, part of the 30S ribosomal subunit. Contacts protein S4.

In terms of biological role, with S4 and S12 plays an important role in translational accuracy. The protein is Small ribosomal subunit protein uS5 of Pyrobaculum calidifontis (strain DSM 21063 / JCM 11548 / VA1).